Reading from the N-terminus, the 83-residue chain is Three-finger toxin MALT0052C (83 aa).

An N-terminal signal peptide occupies residues 1–21; the sequence is MKTLLLTLVVVTIVCLDFGHT. Disulfide bonds link C24/C45, C38/C62, C64/C75, and C76/C81.

It belongs to the three-finger toxin family. Short-chain subfamily. Type I alpha-neurotoxin sub-subfamily. In terms of tissue distribution, expressed by the venom gland.

Its subcellular location is the secreted. Its function is as follows. Binds to muscle nicotinic acetylcholine receptor (nAChR) and inhibit acetylcholine from binding to the receptor, thereby impairing neuromuscular transmission. The polypeptide is Three-finger toxin MALT0052C (Micrurus altirostris (Uruguayan coral snake)).